The following is a 464-amino-acid chain: Arabinose-proton symporter (464 aa).

Transmembrane regions (helical) follow at residues 21–43, 63–85, 92–111, 116–138, 150–172, 185–207, 266–288, 303–325, 332–354, 364–386, 398–420, and 424–446; these read GFVI…DTAV, GLVI…FLSD, ILMT…ALSQ, LIIA…VTYI, LSSL…NLAV, GWRW…LLVV, ALVI…ITYY, GFVT…VLLI, KLMS…SFYF, VLIL…IMIS, AGIA…PMMI, and GLAY…VVTI.

The protein belongs to the major facilitator superfamily. Sugar transporter (TC 2.A.1.1) family.

It is found in the cell membrane. The catalysed reaction is L-arabinose(in) + H(+)(in) = L-arabinose(out) + H(+)(out). It carries out the reaction D-galactose(in) + H(+)(in) = D-galactose(out) + H(+)(out). The enzyme catalyses D-xylose(in) + H(+)(in) = D-xylose(out) + H(+)(out). Its function is as follows. Uptake of L-arabinose across the cytoplasmic membrane with the concomitant transport of protons into the cell (symport system). In the presence of inducing amounts of L-arabinose, can import both D-galactose and D-xylose. Can also transport the disaccharide alpha-1,5-arabinobiose. The sequence is that of Arabinose-proton symporter (araE) from Bacillus subtilis (strain 168).